Consider the following 310-residue polypeptide: MVKVYAPASSANMSVGFDVLGAAVIPVDGALLGDVVTVEAAETFGLNNLGRFADKLPSEPRENIVYQCWERFCQELGKQIPVAMTLEKNMPIGSGLGSSACSVVAALMAMNEHCGKPLNDTRLLALMGELEGRISGSIHYDNVAPCFLGGMQLMIEENDIISQQVPGFDEWLWVLAYPGIKVSTAEARAILPAQYRRQDCIAHGRHLAGFIHACYSRQPELAAKLMKDVIAEPYRERLLPGFRQARQAVAEIGAVASGISGSGPTLFALCDKPDTAQRVADWLGKNYLQNQEGFVHICRLDTAGARVLEN.

91-101 provides a ligand contact to ATP; sequence PIGSGLGSSAC.

This sequence belongs to the GHMP kinase family. Homoserine kinase subfamily.

Its subcellular location is the cytoplasm. It carries out the reaction L-homoserine + ATP = O-phospho-L-homoserine + ADP + H(+). Its pathway is amino-acid biosynthesis; L-threonine biosynthesis; L-threonine from L-aspartate: step 4/5. Functionally, catalyzes the ATP-dependent phosphorylation of L-homoserine to L-homoserine phosphate. In Escherichia coli (strain SE11), this protein is Homoserine kinase.